Consider the following 446-residue polypeptide: NADH oxidase (446 aa).

Residues Gly-7–Ala-11, Asp-32, Cys-42, Val-79, Ala-109–Ser-112, Lys-131, and Tyr-158 each bind FAD. His-10 (proton acceptor) is an active-site residue. Residue Cys-42 is the Redox-active of the active site. At Cys-42 the chain carries Cysteine sulfinic acid (-SO2H). Ile-159, Asp-178, Tyr-187, and Gly-244 together coordinate NAD(+). Asp-282 provides a ligand contact to FAD. Ala-298 provides a ligand contact to NAD(+). FAD contacts are provided by Leu-299, Ala-300, and Ser-301. Gly-329 is a binding site for NAD(+). Phe-427 contacts FAD.

It belongs to the class-III pyridine nucleotide-disulfide oxidoreductase family. In terms of assembly, homodimer. The cofactor is FAD.

The enzyme catalyses 2 NADH + O2 + 2 H(+) = 2 NAD(+) + 2 H2O. With respect to regulation, inhibited by hydrogen peroxide, sulfhydryl reagents and quinine, but not by EDTA. Functionally, catalyzes the four-electron reduction of molecular oxygen to water. Active on beta-NADH, but not on alpha-NADH, beta-NADPH or alpha-NADPH. Under aerobic conditions, oxygen acts as the electron acceptor. Under anaerobic conditions, DCIP and MB can replace oxygen as the electron acceptor. This Lactococcus lactis subsp. cremoris (strain MG1363) protein is NADH oxidase.